The primary structure comprises 372 residues: Probable dual-specificity RNA methyltransferase RlmN (372 aa).

Positions 1 to 20 are disordered; that stretch reads MTSLPLTPVNPDAPARRAAM. The active-site Proton acceptor is Glu112. In terms of domain architecture, Radical SAM core spans 118–357; it reads YPDRVTVCLS…STTVRDTRGR (240 aa). Cys125 and Cys363 are oxidised to a cystine. Positions 132, 136, and 139 each coordinate [4Fe-4S] cluster. Residues 187–188, Ser221, 244–246, and Asn320 contribute to the S-adenosyl-L-methionine site; these read GE and SLH. Cys363 functions as the S-methylcysteine intermediate in the catalytic mechanism.

Belongs to the radical SAM superfamily. RlmN family. The cofactor is [4Fe-4S] cluster.

It is found in the cytoplasm. It catalyses the reaction adenosine(2503) in 23S rRNA + 2 reduced [2Fe-2S]-[ferredoxin] + 2 S-adenosyl-L-methionine = 2-methyladenosine(2503) in 23S rRNA + 5'-deoxyadenosine + L-methionine + 2 oxidized [2Fe-2S]-[ferredoxin] + S-adenosyl-L-homocysteine. The catalysed reaction is adenosine(37) in tRNA + 2 reduced [2Fe-2S]-[ferredoxin] + 2 S-adenosyl-L-methionine = 2-methyladenosine(37) in tRNA + 5'-deoxyadenosine + L-methionine + 2 oxidized [2Fe-2S]-[ferredoxin] + S-adenosyl-L-homocysteine. Functionally, specifically methylates position 2 of adenine 2503 in 23S rRNA and position 2 of adenine 37 in tRNAs. The chain is Probable dual-specificity RNA methyltransferase RlmN from Salinispora tropica (strain ATCC BAA-916 / DSM 44818 / JCM 13857 / NBRC 105044 / CNB-440).